The primary structure comprises 281 residues: CDAN1-interacting nuclease 1 (281 aa).

A Phosphothreonine modification is found at Thr-114.

Its subcellular location is the nucleus. It localises to the cytoplasm. Its function is as follows. Plays a role in erythroid cell differentiation. In Homo sapiens (Human), this protein is CDAN1-interacting nuclease 1.